The following is a 569-amino-acid chain: Glutamate--tRNA ligase (569 aa).

The short motif at 110-120 (PNPNGPPTLGS) is the 'HIGH' region element.

Belongs to the class-I aminoacyl-tRNA synthetase family. Glutamate--tRNA ligase type 2 subfamily.

It localises to the cytoplasm. The catalysed reaction is tRNA(Glu) + L-glutamate + ATP = L-glutamyl-tRNA(Glu) + AMP + diphosphate. Functionally, catalyzes the attachment of glutamate to tRNA(Glu) in a two-step reaction: glutamate is first activated by ATP to form Glu-AMP and then transferred to the acceptor end of tRNA(Glu). This Methanococcoides burtonii (strain DSM 6242 / NBRC 107633 / OCM 468 / ACE-M) protein is Glutamate--tRNA ligase.